The chain runs to 65 residues: Sulfur carrier protein TtuB (65 aa).

Gly65 bears the 1-thioglycine; alternate mark. Gly65 carries the post-translational modification Glycyl adenylate; alternate. Residue Gly65 forms a Glycyl cysteine thioester (Gly-Cys) (interchain with C-192 in TtuC); alternate linkage. Gly65 participates in a covalent cross-link: Glycyl lysine isopeptide (Gly-Lys) (interchain with K-? in acceptor proteins); alternate.

It belongs to the TtuB family. As to quaternary structure, is able to form a heterocomplex with TtuA. Post-translationally, the C-terminal glycine residue of TtuB is first activated by TtuC as an acyl-adenylate (TtuB-COAMP), and then converted to the thiocarboxylate form (TtuB-COSH) by the cysteine desulfurases IscS or SufS.

The protein operates within tRNA modification. Functionally, required for the 2-thiolation of 5-methyluridine residue at position 54 in the T loop of tRNAs, leading to 5-methyl-2-thiouridine (m(5)s(2)U or s(2)T). This modification allows thermal stabilization of tRNAs in thermophilic microorganisms, and is essential for cell growth at high temperatures. Thiocarboxylated TtuB functions as the sulfur donor in the sulfurtransferase reaction catalyzed by TtuA. TtuB also functions as a protein modifier covalently attached to lysine residues of the target proteins TtuA and TtuC. TtuB conjugation might play a regulatory role to ensure appropriate sulfur transfer in cells. In Thermus thermophilus (strain ATCC BAA-163 / DSM 7039 / HB27), this protein is Sulfur carrier protein TtuB.